The chain runs to 144 residues: Large ribosomal subunit protein uL15 (144 aa).

The segment at 1–45 (MNLNTLSPDPGSRPSRRRVGRGIGSGLGKTCGKGHKGQKSRAGGY) is disordered. The span at 21–31 (RGIGSGLGKTC) shows a compositional bias: gly residues.

It belongs to the universal ribosomal protein uL15 family. As to quaternary structure, part of the 50S ribosomal subunit.

Binds to the 23S rRNA. This Legionella pneumophila (strain Paris) protein is Large ribosomal subunit protein uL15.